A 33-amino-acid polypeptide reads, in one-letter code: Rhinophrynin-33 (33 aa).

As to expression, expressed by the skin glands.

The protein localises to the secreted. Its function is as follows. Non-cytotoxic peptide with immunosuppressive and insulinotropic effects. Induces an increased production of the anti-inflammatory cytokine IL-10 and inhibits production of the pro-inflammatory cytokines TNF-alpha and IL-1beta, when incubated with mouse peritoneal cells. Does not display growth-inhibitory activity against the Gram-positive S.epidermidis and Gram-negative E.coli bacteria and against the opportunistic yeast pathogen C.parapsilosis (MIC&gt;128 uM). In addition, it lacks cytotoxic activity against mouse erythrocytes (LC(50)&gt;500 uM) and A549 human non-small cell lung adenocarcinoma cells (LC(50)&gt;100 uM). Moderately stimulates insulin release from rat clonal beta-cells and mouse pancreatic islets. Non-cytotoxic peptide with immunosuppressive but without insulinotropic effects. Inhibits production of the pro-inflammatory cytokines TNF-alpha, but has no effect on IL-10 and IL-1beta production, when incubated with mouse peritoneal cells. Has no activity of stimulation of insulin release. The sequence is that of Rhinophrynin-33 from Rhinophrynus dorsalis (Mexican burrowing toad).